Reading from the N-terminus, the 539-residue chain is 2-isopropylmalate synthase (539 aa).

The region spanning 8–269 is the Pyruvate carboxyltransferase domain; that stretch reads VLIFDTTLRD…YFNPFFGRPP (262 aa). The Mn(2+) site is built by D17, H208, H210, and N244. A regulatory domain region spans residues 408–539; the sequence is QLKLVQVSCG…DLAKVEKKGI (132 aa).

The protein belongs to the alpha-IPM synthase/homocitrate synthase family. LeuA type 1 subfamily. In terms of assembly, homodimer. Requires Mn(2+) as cofactor.

It localises to the cytoplasm. The enzyme catalyses 3-methyl-2-oxobutanoate + acetyl-CoA + H2O = (2S)-2-isopropylmalate + CoA + H(+). It participates in amino-acid biosynthesis; L-leucine biosynthesis; L-leucine from 3-methyl-2-oxobutanoate: step 1/4. Functionally, catalyzes the condensation of the acetyl group of acetyl-CoA with 3-methyl-2-oxobutanoate (2-ketoisovalerate) to form 3-carboxy-3-hydroxy-4-methylpentanoate (2-isopropylmalate). This chain is 2-isopropylmalate synthase, found in Prochlorococcus marinus (strain NATL2A).